The chain runs to 502 residues: ATP synthase subunit alpha (502 aa).

169 to 176 contacts ATP; the sequence is GDRQTGKT.

Belongs to the ATPase alpha/beta chains family. As to quaternary structure, F-type ATPases have 2 components, CF(1) - the catalytic core - and CF(0) - the membrane proton channel. CF(1) has five subunits: alpha(3), beta(3), gamma(1), delta(1), epsilon(1). CF(0) has three main subunits: a(1), b(2) and c(9-12). The alpha and beta chains form an alternating ring which encloses part of the gamma chain. CF(1) is attached to CF(0) by a central stalk formed by the gamma and epsilon chains, while a peripheral stalk is formed by the delta and b chains.

It localises to the cell membrane. The catalysed reaction is ATP + H2O + 4 H(+)(in) = ADP + phosphate + 5 H(+)(out). Produces ATP from ADP in the presence of a proton gradient across the membrane. The alpha chain is a regulatory subunit. The protein is ATP synthase subunit alpha of Streptococcus pyogenes serotype M18 (strain MGAS8232).